The primary structure comprises 146 residues: Hemoglobin subunit beta-C (146 aa).

One can recognise a Globin domain in the interval 2-146 (EWTDFERATI…VVSSLGRQYH (145 aa)). Positions 63 and 92 each coordinate heme b.

The protein belongs to the globin family. HbC is a heterotetramer of two alpha chains and two beta-C chains. As to expression, red blood cells.

Functionally, involved in oxygen transport from gills to the various peripheral tissues. The sequence is that of Hemoglobin subunit beta-C (hbbc) from Trematomus bernacchii (Emerald rockcod).